The following is a 202-amino-acid chain: Nigerythrin (202 aa).

One can recognise a Ferritin-like diiron domain in the interval Lys23–Asp168. Residues Glu40, Glu73, Glu115, Glu118, Glu149, His152, Cys174, Cys177, Cys189, and Cys192 each contribute to the Fe cation site. The 34-residue stretch at Asp169–Tyr202 folds into the Rubredoxin-like domain.

In terms of assembly, homodimer. May possess two rubredoxin-like centers and two hemerythrin-like binuclear-iron centers per dimer.

It is found in the cytoplasm. In terms of biological role, exhibits NADH peroxidase activity (in vitro). In Nitratidesulfovibrio vulgaris (strain ATCC 29579 / DSM 644 / CCUG 34227 / NCIMB 8303 / VKM B-1760 / Hildenborough) (Desulfovibrio vulgaris), this protein is Nigerythrin (ngr).